We begin with the raw amino-acid sequence, 153 residues long: Putative pre-16S rRNA nuclease (153 aa).

The protein belongs to the YqgF nuclease family.

Its subcellular location is the cytoplasm. Its function is as follows. Could be a nuclease involved in processing of the 5'-end of pre-16S rRNA. The protein is Putative pre-16S rRNA nuclease of Prochlorococcus marinus (strain MIT 9301).